The following is a 379-amino-acid chain: UDP-4-amino-4-deoxy-L-arabinose--oxoglutarate aminotransferase (379 aa).

N6-(pyridoxal phosphate)lysine is present on lysine 182.

The protein belongs to the DegT/DnrJ/EryC1 family. ArnB subfamily. In terms of assembly, homodimer. Pyridoxal 5'-phosphate is required as a cofactor.

The catalysed reaction is UDP-4-amino-4-deoxy-beta-L-arabinose + 2-oxoglutarate = UDP-beta-L-threo-pentopyranos-4-ulose + L-glutamate. Its pathway is nucleotide-sugar biosynthesis; UDP-4-deoxy-4-formamido-beta-L-arabinose biosynthesis; UDP-4-deoxy-4-formamido-beta-L-arabinose from UDP-alpha-D-glucuronate: step 2/3. It functions in the pathway bacterial outer membrane biogenesis; lipopolysaccharide biosynthesis. Its function is as follows. Catalyzes the conversion of UDP-4-keto-arabinose (UDP-Ara4O) to UDP-4-amino-4-deoxy-L-arabinose (UDP-L-Ara4N). The modified arabinose is attached to lipid A and is required for resistance to polymyxin and cationic antimicrobial peptides. In Salmonella choleraesuis (strain SC-B67), this protein is UDP-4-amino-4-deoxy-L-arabinose--oxoglutarate aminotransferase.